The chain runs to 703 residues: Polyribonucleotide nucleotidyltransferase (703 aa).

D488 and D494 together coordinate Mg(2+). The KH domain occupies 555 to 614 (PRLYVMKINPEKIRDVIGKGGAVIRALTEETGTQINIEEDGTITIASNDSAKADEAKRRI). Residues 624-692 (GKVYEGAITK…EKGRVKLSMK (69 aa)) enclose the S1 motif domain.

Belongs to the polyribonucleotide nucleotidyltransferase family. The cofactor is Mg(2+).

The protein localises to the cytoplasm. The enzyme catalyses RNA(n+1) + phosphate = RNA(n) + a ribonucleoside 5'-diphosphate. Functionally, involved in mRNA degradation. Catalyzes the phosphorolysis of single-stranded polyribonucleotides processively in the 3'- to 5'-direction. This Polaromonas naphthalenivorans (strain CJ2) protein is Polyribonucleotide nucleotidyltransferase.